Reading from the N-terminus, the 229-residue chain is uncharacterized protein (229 aa).

The first 26 residues, 1 to 26, serve as a signal peptide directing secretion; that stretch reads MSRNDARYLRCTAALGAAFFACGAAA.

This sequence belongs to the OmpW/AlkL family.

The protein resides in the cell outer membrane. This is an uncharacterized protein from Sinorhizobium fredii (strain NBRC 101917 / NGR234).